Consider the following 533-residue polypeptide: Di/tripeptide-binding protein 3 (533 aa).

An N-terminal signal peptide occupies residues 1–24; it reads MRKILPLRAWLAAGLILGSPFSHA.

It belongs to the bacterial solute-binding protein 5 family. The complex is composed of two ATP-binding proteins (DppD and DppF), two transmembrane proteins (DppB and DppC) and a solute-binding protein (DppA3). Five orthologous SBPs (DppA1-A5) are present in P.aeruginosa, which increases the substrate specificity of the DppBCDF transporter.

Part of the ABC transporter DppABCDF involved in the uptake of various di/tripeptides. Prefers dipeptides with acidic residues at the C-terminal end. Involved in the uptake of phaseolotoxin, a toxic tripeptide inhibiting the enzyme ornithine carbamoyltransferase. The chain is Di/tripeptide-binding protein 3 from Pseudomonas aeruginosa (strain UCBPP-PA14).